Consider the following 635-residue polypeptide: Threonine--tRNA ligase (635 aa).

The region spanning 1–61 (MIKITLKDGK…HKDSSLEILT (61 aa)) is the TGS domain. A catalytic region spans residues 242–532 (DHRKLGKELD…LIEQYAGAFP (291 aa)). Zn(2+)-binding residues include Cys333, His384, and His509.

It belongs to the class-II aminoacyl-tRNA synthetase family. In terms of assembly, homodimer. It depends on Zn(2+) as a cofactor.

The protein resides in the cytoplasm. The catalysed reaction is tRNA(Thr) + L-threonine + ATP = L-threonyl-tRNA(Thr) + AMP + diphosphate + H(+). Catalyzes the attachment of threonine to tRNA(Thr) in a two-step reaction: L-threonine is first activated by ATP to form Thr-AMP and then transferred to the acceptor end of tRNA(Thr). Also edits incorrectly charged L-seryl-tRNA(Thr). This is Threonine--tRNA ligase from Clostridium botulinum (strain ATCC 19397 / Type A).